We begin with the raw amino-acid sequence, 400 residues long: Deoxyguanosinetriphosphate triphosphohydrolase-like protein (400 aa).

Residues 76-204 (RLTHTLEVAQ…VNIADPLAYC (129 aa)) form the HD domain.

This sequence belongs to the dGTPase family. Type 2 subfamily.

In Syntrophus aciditrophicus (strain SB), this protein is Deoxyguanosinetriphosphate triphosphohydrolase-like protein.